We begin with the raw amino-acid sequence, 365 residues long: MSLIRKKGFYKQDVNKTAWELPKTYVSPTHVGSGAYGSVCSAIDKRSGEKVAIKKLSRPFQSEIFAKRAYRELLLLKHMQHENVIGLLDVFTPASSLRNFYDFYLVMPFMQTDLQKIMGMEFSEEKIQYLVYQMLKGLKYIHSAGVVHRDLKPGNLAVNEDCELKILDFGLARHADAEMTGYVVTRWYRAPEVILSWMHYNQTVDIWSVGCIMAEMLTGKTLFKGKDYLDQLTQILKVTGVPGTEFVQKLNDKAAKSYIQSLPQTPRKDFTQLFPRASPQAADLLEKMLELDVDKRLTAAQALTHPFFEPFRDPEEETEAQQPFDDSLEHEKLTVDEWKQHIYKEIVNFSPIARKDSRRRSGMKL.

A Protein kinase domain is found at 25–308 (YVSPTHVGSG…AAQALTHPFF (284 aa)). Position 31-39 (31-39 (VGSGAYGSV)) interacts with ATP. The residue at position 47 (Ser-47) is a Phosphoserine. ATP is bound at residue Lys-54. Catalysis depends on Asp-150, which acts as the Proton acceptor. A Phosphothreonine; by MAP2K3, MAP2K4, MAP2K6 and MAP2K7 modification is found at Thr-180. A TXY motif is present at residues 180–182 (TGY). A Phosphotyrosine; by MAP2K3, MAP2K4, MAP2K6 and MAP2K7 modification is found at Tyr-182. Ser-350 carries the phosphoserine modification.

This sequence belongs to the protein kinase superfamily. CMGC Ser/Thr protein kinase family. MAP kinase subfamily. In terms of assembly, interacts with MAPK8IP2. It depends on Mg(2+) as a cofactor. Post-translationally, dually phosphorylated on Thr-180 and Tyr-182 by MAP2K3/MKK3, MAP2K4/MKK4, MAP2K6/MKK6 and MAP2K7/MKK7, which activates the enzyme. Dephosphorylated by dual specificity phosphatase DUSP1. Expressed in testes, pancreas, small intestine, lung and kidney. Abundant in macrophages, also present in neutrophils, CD4+ T-cells, and endothelial cells.

It catalyses the reaction L-seryl-[protein] + ATP = O-phospho-L-seryl-[protein] + ADP + H(+). The catalysed reaction is L-threonyl-[protein] + ATP = O-phospho-L-threonyl-[protein] + ADP + H(+). With respect to regulation, activated by phosphorylation on threonine and tyrosine by dual specificity kinases, MAP2K3/MKK3, MAP2K6/MKK6, MAP2K4/MKK4 and MAP2K7/MKK7. Activation by ultraviolet radiation, hyperosmotic shock, anisomycin or by TNF-alpha is mediated by MAP2K3/MKK3. Inhibited by dual specificity phosphatase DUSP1. Functionally, serine/threonine kinase which acts as an essential component of the MAP kinase signal transduction pathway. MAPK13 is one of the four p38 MAPKs which play an important role in the cascades of cellular responses evoked by extracellular stimuli such as pro-inflammatory cytokines or physical stress leading to direct activation of transcription factors such as ELK1 and ATF2. Accordingly, p38 MAPKs phosphorylate a broad range of proteins and it has been estimated that they may have approximately 200 to 300 substrates each. MAPK13 is one of the less studied p38 MAPK isoforms. Some of the targets are downstream kinases such as MAPKAPK2, which are activated through phosphorylation and further phosphorylate additional targets. Plays a role in the regulation of protein translation by phosphorylating and inactivating EEF2K. Involved in cytoskeletal remodeling through phosphorylation of MAPT and STMN1. Mediates UV irradiation induced up-regulation of the gene expression of CXCL14. Plays an important role in the regulation of epidermal keratinocyte differentiation, apoptosis and skin tumor development. Phosphorylates the transcriptional activator MYB in response to stress which leads to rapid MYB degradation via a proteasome-dependent pathway. MAPK13 also phosphorylates and down-regulates PRKD1 during regulation of insulin secretion in pancreatic beta cells. This Homo sapiens (Human) protein is Mitogen-activated protein kinase 13 (MAPK13).